We begin with the raw amino-acid sequence, 799 residues long: Protein translocase subunit SecA (799 aa).

ATP is bound by residues Gln85, 103 to 107 (GEGKT), and Asp504.

It belongs to the SecA family. In terms of assembly, monomer and homodimer. Part of the essential Sec protein translocation apparatus which comprises SecA, SecYEG and auxiliary proteins SecDF. Other proteins may also be involved.

The protein resides in the cell membrane. Its subcellular location is the cytoplasm. It carries out the reaction ATP + H2O + cellular proteinSide 1 = ADP + phosphate + cellular proteinSide 2.. Functionally, part of the Sec protein translocase complex. Interacts with the SecYEG preprotein conducting channel. Has a central role in coupling the hydrolysis of ATP to the transfer of proteins into and across the cell membrane, serving as an ATP-driven molecular motor driving the stepwise translocation of polypeptide chains across the membrane. This chain is Protein translocase subunit SecA, found in Lactobacillus gasseri (strain ATCC 33323 / DSM 20243 / BCRC 14619 / CIP 102991 / JCM 1131 / KCTC 3163 / NCIMB 11718 / NCTC 13722 / AM63).